Reading from the N-terminus, the 369-residue chain is sn-glycerol-3-phosphate import ATP-binding protein UgpC 1 (369 aa).

An ABC transporter domain is found at Ile-4 to Val-234. Gly-36–Ser-43 is an ATP binding site.

Belongs to the ABC transporter superfamily. sn-glycerol-3-phosphate importer (TC 3.A.1.1.3) family. In terms of assembly, the complex is composed of two ATP-binding proteins (UgpC), two transmembrane proteins (UgpA and UgpE) and a solute-binding protein (UgpB).

It localises to the cell inner membrane. The enzyme catalyses sn-glycerol 3-phosphate(out) + ATP + H2O = sn-glycerol 3-phosphate(in) + ADP + phosphate + H(+). In terms of biological role, part of the ABC transporter complex UgpBAEC involved in sn-glycerol-3-phosphate (G3P) import. Responsible for energy coupling to the transport system. This chain is sn-glycerol-3-phosphate import ATP-binding protein UgpC 1, found in Rhizobium johnstonii (strain DSM 114642 / LMG 32736 / 3841) (Rhizobium leguminosarum bv. viciae).